Here is a 56-residue protein sequence, read N- to C-terminus: Large ribosomal subunit protein bL32 (56 aa).

Positions methionine 1 to arginine 16 are enriched in basic residues. The disordered stretch occupies residues methionine 1 to serine 28.

The protein belongs to the bacterial ribosomal protein bL32 family.

The chain is Large ribosomal subunit protein bL32 from Vibrio campbellii (strain ATCC BAA-1116).